We begin with the raw amino-acid sequence, 91 residues long: MGRSLKKGPFIADSLLKKVEKQNTDNDKSVIKTWSRSSTILPVMIGHTIAVHNGKAHIPVFITEQMIGHKLGEFAPTRTYRGHLRDKKGAR.

The protein belongs to the universal ribosomal protein uS19 family.

Functionally, protein S19 forms a complex with S13 that binds strongly to the 16S ribosomal RNA. This is Small ribosomal subunit protein uS19 from Prochlorococcus marinus subsp. pastoris (strain CCMP1986 / NIES-2087 / MED4).